The chain runs to 394 residues: Isopentenyl-diphosphate delta-isomerase (394 aa).

10–11 (RK) contributes to the substrate binding site. FMN contacts are provided by residues T67, 68-70 (GMT), S101, and N129. 101-103 (SQR) serves as a coordination point for substrate. Substrate is bound at residue Q168. Residue E169 participates in Mg(2+) binding. Residues K200, S225, T230, 279-281 (GMR), and 300-301 (AL) contribute to the FMN site.

The protein belongs to the IPP isomerase type 2 family. Homooctamer. Dimer of tetramers. It depends on FMN as a cofactor. NADPH is required as a cofactor. Mg(2+) serves as cofactor.

Its subcellular location is the cytoplasm. The enzyme catalyses isopentenyl diphosphate = dimethylallyl diphosphate. Involved in the biosynthesis of isoprenoids. Catalyzes the 1,3-allylic rearrangement of the homoallylic substrate isopentenyl (IPP) to its allylic isomer, dimethylallyl diphosphate (DMAPP). This chain is Isopentenyl-diphosphate delta-isomerase, found in Pyrococcus furiosus (strain ATCC 43587 / DSM 3638 / JCM 8422 / Vc1).